We begin with the raw amino-acid sequence, 352 residues long: Molybdenum import ATP-binding protein ModC (352 aa).

The ABC transporter domain occupies 1-229 (MLQLDFHQQL…SALRPWLPKD (229 aa)). ATP is bound at residue 31 to 38 (GVSGAGKT). The 64-residue stretch at 289 to 352 (KSSIRNVLRA…AQIKSVSITA (64 aa)) folds into the Mop domain.

Belongs to the ABC transporter superfamily. Molybdate importer (TC 3.A.1.8) family. As to quaternary structure, the complex is composed of two ATP-binding proteins (ModC), two transmembrane proteins (ModB) and a solute-binding protein (ModA).

It localises to the cell inner membrane. The catalysed reaction is molybdate(out) + ATP + H2O = molybdate(in) + ADP + phosphate + H(+). Part of the ABC transporter complex ModABC involved in molybdenum import. Responsible for energy coupling to the transport system. In Pectobacterium atrosepticum (strain SCRI 1043 / ATCC BAA-672) (Erwinia carotovora subsp. atroseptica), this protein is Molybdenum import ATP-binding protein ModC.